The sequence spans 1534 residues: ABC transporter G family member 6 (1534 aa).

Basic and acidic residues predominate over residues 1–11 (MAKQDPKDKNS). The segment at 1 to 85 (MAKQDPKDKN…ESNYDSDDEK (85 aa)) is disordered. Over residues 21–65 (NNNNNENLDNDQELLNNNNNNNNNNNNNNNNNNNNNNNNNNNNNL) the composition is skewed to low complexity. The ABC transporter 1 domain maps to 138-385 (VYCRNATYTV…FKKLGFACPS (248 aa)). Residue 177–184 (GTPGCGKS) participates in ATP binding. The ABC transmembrane type-2 1 domain maps to 481–757 (RRNYYNFLTR…VVCFFALKYF (277 aa)). 7 helical membrane passes run 486-506 (NFLT…TLYW), 521-541 (LLFF…NSFF), 566-586 (IICD…IVYW), 592-612 (PVFI…NLSL), 625-645 (IEIA…FSGF), 652-672 (IGGW…FQGL), and 734-754 (VVFG…FFAL). A disordered region spans residues 781–907 (KQDEESAAIS…KSKNGKDIGS (127 aa)). The span at 797–808 (IDDDNDDDADYE) shows a compositional bias: acidic residues. A compositionally biased stretch (polar residues) spans 830 to 841 (SPSSLTTGSPYY). A compositionally biased stretch (low complexity) spans 842-856 (NINNNNNNLSGSGNN). Polar residues predominate over residues 864-873 (TPSNLSPSVN). Low complexity predominate over residues 874-896 (SPITINSPMPTSPSNNNNNNNSN). The segment covering 897-906 (EKSKNGKDIG) has biased composition (basic and acidic residues). The region spanning 924–1166 (VKVDDPDNPK…VILDYCDKLG (243 aa)) is the ABC transporter 2 domain. 960–967 (GPSGAGKS) contributes to the ATP binding site. Residues 1256–1529 (LRRPAIFVSN…GLSFWGFKKI (274 aa)) enclose the ABC transmembrane type-2 2 domain. A run of 6 helical transmembrane segments spans residues 1261-1281 (IFVS…TLFV), 1296-1316 (LLFF…PTTV), 1345-1365 (YPFT…IAGL), 1377-1397 (CLFI…CLAV), 1404-1424 (MAST…GFVI), and 1506-1526 (IDIA…FWGF).

The protein belongs to the ABC transporter superfamily. ABCG family. PDR (TC 3.A.1.205) subfamily.

The protein resides in the membrane. This chain is ABC transporter G family member 6 (abcG6), found in Dictyostelium discoideum (Social amoeba).